The primary structure comprises 344 residues: L-rhamnose-proton symporter (344 aa).

The next 10 membrane-spanning stretches (helical) occupy residues 4-24 (AITMGIFWHLIGAASAACFYA), 38-58 (WSVGGIVSWIILPWAISALLL), 68-88 (FSLSTLLPVFLFGAMWGIGNI), 101-121 (MGIGIAIGITLIVGTLMTPII), 137-157 (TLLGVLVALIGVGIVTRAGQL), 175-195 (LVLAVMCGIFSAGMSFAMNAA), 214-234 (LPSYVVIMGGGAIINLGFCFI), 259-279 (VLLSALGGLMWYLQFFFYAWG), 290-310 (ISWMLHMSFYVLCGGIVGLVL), and 323-343 (VLSLGCVVIIVAANIVGIGMA).

It belongs to the L-rhamnose transporter (TC 2.A.7.6) family.

The protein resides in the cell inner membrane. The enzyme catalyses L-rhamnopyranose(in) + H(+)(in) = L-rhamnopyranose(out) + H(+)(out). Its function is as follows. Uptake of L-rhamnose across the cytoplasmic membrane with the concomitant transport of protons into the cell (symport system). The chain is L-rhamnose-proton symporter from Shigella dysenteriae serotype 1 (strain Sd197).